We begin with the raw amino-acid sequence, 556 residues long: 2-succinyl-5-enolpyruvyl-6-hydroxy-3-cyclohexene-1-carboxylate synthase (556 aa).

It belongs to the TPP enzyme family. MenD subfamily. In terms of assembly, homodimer. Mg(2+) is required as a cofactor. The cofactor is Mn(2+). It depends on thiamine diphosphate as a cofactor.

The catalysed reaction is isochorismate + 2-oxoglutarate + H(+) = 5-enolpyruvoyl-6-hydroxy-2-succinyl-cyclohex-3-ene-1-carboxylate + CO2. It functions in the pathway quinol/quinone metabolism; 1,4-dihydroxy-2-naphthoate biosynthesis; 1,4-dihydroxy-2-naphthoate from chorismate: step 2/7. The protein operates within quinol/quinone metabolism; menaquinone biosynthesis. Functionally, catalyzes the thiamine diphosphate-dependent decarboxylation of 2-oxoglutarate and the subsequent addition of the resulting succinic semialdehyde-thiamine pyrophosphate anion to isochorismate to yield 2-succinyl-5-enolpyruvyl-6-hydroxy-3-cyclohexene-1-carboxylate (SEPHCHC). This Enterobacter sp. (strain 638) protein is 2-succinyl-5-enolpyruvyl-6-hydroxy-3-cyclohexene-1-carboxylate synthase.